The following is a 234-amino-acid chain: NAD-dependent protein deacylase (234 aa).

Residues 1-234 (MKNLVILSGA…IEMASQEMLK (234 aa)) enclose the Deacetylase sirtuin-type domain. 9–28 (GAGISAESGIKTFRDAGGLW) is an NAD(+) binding site. The substrate site is built by tyrosine 53 and arginine 56. 86-89 (QNVD) is a binding site for NAD(+). Residue histidine 104 is the Proton acceptor of the active site. Residues 169–171 (GTS) and methionine 217 each bind NAD(+).

This sequence belongs to the sirtuin family. Class III subfamily.

The protein resides in the cytoplasm. It catalyses the reaction N(6)-acetyl-L-lysyl-[protein] + NAD(+) + H2O = 2''-O-acetyl-ADP-D-ribose + nicotinamide + L-lysyl-[protein]. The enzyme catalyses N(6)-succinyl-L-lysyl-[protein] + NAD(+) + H2O = 2''-O-succinyl-ADP-D-ribose + nicotinamide + L-lysyl-[protein]. Its function is as follows. NAD-dependent lysine deacetylase and desuccinylase that specifically removes acetyl and succinyl groups on target proteins. Modulates the activities of several proteins which are inactive in their acylated form. This Helicobacter pylori (strain J99 / ATCC 700824) (Campylobacter pylori J99) protein is NAD-dependent protein deacylase.